A 763-amino-acid chain; its full sequence is Phosphoglycerol transferase I (763 aa).

The next 4 membrane-spanning stretches (helical) occupy residues methionine 1 to alanine 21, tryptophan 26 to phenylalanine 46, isoleucine 77 to isoleucine 97, and phenylalanine 108 to phenylalanine 128.

This sequence belongs to the OpgB family.

The protein resides in the cell inner membrane. The enzyme catalyses a phosphatidylglycerol + a membrane-derived-oligosaccharide D-glucose = a 1,2-diacyl-sn-glycerol + a membrane-derived-oligosaccharide 6-(glycerophospho)-D-glucose.. The protein operates within glycan metabolism; osmoregulated periplasmic glucan (OPG) biosynthesis. Transfers a phosphoglycerol residue from phosphatidylglycerol to the membrane-bound nascent glucan backbones. The protein is Phosphoglycerol transferase I of Escherichia coli (strain 55989 / EAEC).